We begin with the raw amino-acid sequence, 189 residues long: UPF0312 protein VIBHAR_05924 (189 aa).

A signal peptide spans 1–22 (MKKSLFATGLAIAIALPFGANA).

The protein belongs to the UPF0312 family. Type 1 subfamily.

The protein localises to the periplasm. The chain is UPF0312 protein VIBHAR_05924 from Vibrio campbellii (strain ATCC BAA-1116).